A 56-amino-acid polypeptide reads, in one-letter code: Large ribosomal subunit protein eL24 (56 aa).

Positions 6, 9, 32, and 36 each coordinate Zn(2+). The segment at 6 to 36 (CSFCNTRITPGTGKLYAKKDGTVYYFCSSKC) adopts a C4-type zinc-finger fold.

It belongs to the eukaryotic ribosomal protein eL24 family. As to quaternary structure, part of the 50S ribosomal subunit. Forms a cluster with proteins L3 and L14. Requires Zn(2+) as cofactor.

Binds to the 23S rRNA. This Methanothrix thermoacetophila (strain DSM 6194 / JCM 14653 / NBRC 101360 / PT) (Methanosaeta thermophila) protein is Large ribosomal subunit protein eL24.